The primary structure comprises 183 residues: Tetrahydromethanopterin S-methyltransferase subunit A 2 (183 aa).

Residues 1–101 (MFLMVEKKPV…TMKALHSNGV (101 aa)) lie on the Cytoplasmic side of the membrane. His87 lines the 5-hydroxybenzimidazolylcob(I)amide pocket. A helical membrane pass occupies residues 102–118 (DLETGRIIGATGAIPYI). Topologically, residues 119-183 (ENMPEEAIER…IGKGDSEENT (65 aa)) are extracellular.

This sequence belongs to the MtrA family. In terms of assembly, the complex is composed of 8 subunits; MtrA, MtrB, MtrC, MtrD, MtrE, MtrF, MtrG and MtrH. Requires 5-hydroxybenzimidazolylcob(I)amide as cofactor.

It localises to the cell membrane. The enzyme catalyses 5-methyl-5,6,7,8-tetrahydromethanopterin + coenzyme M + 2 Na(+)(in) = 5,6,7,8-tetrahydromethanopterin + methyl-coenzyme M + 2 Na(+)(out). Its pathway is one-carbon metabolism; methanogenesis from CO(2); methyl-coenzyme M from 5,10-methylene-5,6,7,8-tetrahydromethanopterin: step 2/2. Part of a complex that catalyzes the formation of methyl-coenzyme M and tetrahydromethanopterin from coenzyme M and methyl-tetrahydromethanopterin. This is an energy-conserving, sodium-ion translocating step. In Methanothermobacter thermautotrophicus (strain ATCC 29096 / DSM 1053 / JCM 10044 / NBRC 100330 / Delta H) (Methanobacterium thermoautotrophicum), this protein is Tetrahydromethanopterin S-methyltransferase subunit A 2.